Here is a 191-residue protein sequence, read N- to C-terminus: Ciliary microtubule-associated protein 3 (191 aa).

Interacts with proteins involved in ciliary transport, including ARL13B, CETN1, KIF3A, RAB6A, RAB8A, TUBB1 and TUBG1. Interacts with AURKA.

Its subcellular location is the cytoplasmic vesicle. It is found in the golgi apparatus. The protein resides in the trans-Golgi network. It localises to the cytoplasm. During primary cilia disassembly, involved in cilia disassembly. Required specifically to control cilia retraction as well as the liberation and duplication of the basal body/centrosome. May act by stimulating AURKA activity at the basal body in a cell cycle-dependent manner. The sequence is that of Ciliary microtubule-associated protein 3 from Homo sapiens (Human).